Consider the following 449-residue polypeptide: Probable glucuronosyltransferase 47 A (449 aa).

The Cytoplasmic portion of the chain corresponds to 1 to 31; sequence MEHPLECADSCSLAMSWFCNKKCRGWGLMKR. A helical; Signal-anchor for type II membrane protein transmembrane segment spans residues 32-52; that stretch reads TVVASGLRSVVLLLLFIYFVQ. The Lumenal portion of the chain corresponds to 53–449; that stretch reads DVTAEMGHQR…GDLYPWGNDL (397 aa). N-linked (GlcNAc...) asparagine glycans are attached at residues asparagine 172 and asparagine 433.

The protein belongs to the glycosyltransferase 47 family. In terms of tissue distribution, mostly expressed in newly formed or expanding tissues.

It localises to the golgi apparatus membrane. In terms of biological role, involved in the synthesis of glucuronoxylan hemicellulose in secondary cell walls. The protein is Probable glucuronosyltransferase 47 A of Physcomitrium patens (Spreading-leaved earth moss).